We begin with the raw amino-acid sequence, 229 residues long: 7-cyano-7-deazaguanine synthase (229 aa).

Leucine 7–leucine 17 is an ATP binding site. Zn(2+)-binding residues include cysteine 191, cysteine 204, cysteine 207, and cysteine 210.

Belongs to the QueC family. Zn(2+) is required as a cofactor.

The enzyme catalyses 7-carboxy-7-deazaguanine + NH4(+) + ATP = 7-cyano-7-deazaguanine + ADP + phosphate + H2O + H(+). It participates in purine metabolism; 7-cyano-7-deazaguanine biosynthesis. Functionally, catalyzes the ATP-dependent conversion of 7-carboxy-7-deazaguanine (CDG) to 7-cyano-7-deazaguanine (preQ(0)). The polypeptide is 7-cyano-7-deazaguanine synthase (Cyanothece sp. (strain PCC 7425 / ATCC 29141)).